Here is a 274-residue protein sequence, read N- to C-terminus: Secreted RxLR effector protein 144 (274 aa).

A signal peptide spans 1 to 20; sequence MRPWLLLLVGLSSFFALSTS. Residues 49–72 carry the RxLR-dEER motif; that stretch reads RKLRAFGGDTNTLKDSGKARREEK.

Belongs to the RxLR effector family.

The protein localises to the secreted. It is found in the host nucleus. Its subcellular location is the host cytoplasm. Its function is as follows. Secreted effector that completely suppresses the host cell death induced by cell death-inducing proteins. In Plasmopara viticola (Downy mildew of grapevine), this protein is Secreted RxLR effector protein 144.